The primary structure comprises 104 residues: uncharacterized protein (104 aa).

A coiled-coil region spans residues 42–104 (ARDSFDQDFE…AREERHKLGR (63 aa)).

Belongs to the WXG100 family.

This is an uncharacterized protein from Bacillus subtilis (strain 168).